A 173-amino-acid polypeptide reads, in one-letter code: Dual-action ribosomal maturation protein DarP (173 aa).

It belongs to the DarP family.

The protein resides in the cytoplasm. Functionally, member of a network of 50S ribosomal subunit biogenesis factors which assembles along the 30S-50S interface, preventing incorrect 23S rRNA structures from forming. Promotes peptidyl transferase center (PTC) maturation. This chain is Dual-action ribosomal maturation protein DarP, found in Pseudomonas putida (strain ATCC 700007 / DSM 6899 / JCM 31910 / BCRC 17059 / LMG 24140 / F1).